Consider the following 269-residue polypeptide: Hydroxyethylthiazole kinase (269 aa).

Substrate is bound at residue methionine 46. Residues arginine 122 and threonine 168 each coordinate ATP. Glycine 195 serves as a coordination point for substrate.

This sequence belongs to the Thz kinase family. The cofactor is Mg(2+).

The enzyme catalyses 5-(2-hydroxyethyl)-4-methylthiazole + ATP = 4-methyl-5-(2-phosphooxyethyl)-thiazole + ADP + H(+). The protein operates within cofactor biosynthesis; thiamine diphosphate biosynthesis; 4-methyl-5-(2-phosphoethyl)-thiazole from 5-(2-hydroxyethyl)-4-methylthiazole: step 1/1. Catalyzes the phosphorylation of the hydroxyl group of 4-methyl-5-beta-hydroxyethylthiazole (THZ). In Geobacillus thermodenitrificans (strain NG80-2), this protein is Hydroxyethylthiazole kinase.